Consider the following 78-residue polypeptide: Large ribosomal subunit protein bL28 (78 aa).

A disordered region spans residues 1 to 28; that stretch reads MSRRCQVRGTKPEFGNNVSHSQRHTKRR.

The protein belongs to the bacterial ribosomal protein bL28 family.

This is Large ribosomal subunit protein bL28 from Cutibacterium acnes (strain DSM 16379 / KPA171202) (Propionibacterium acnes).